Here is a 653-residue protein sequence, read N- to C-terminus: Putative clathrin assembly protein At2g25430 (653 aa).

In terms of domain architecture, ENTH spans 23-159 (VASNMAPDLE…ELALFERKSG (137 aa)). Over residues 160–171 (VSVNSGGNSSHH) the composition is skewed to low complexity. The segment at 160–240 (VSVNSGGNSS…GGGGGGRDEK (81 aa)) is disordered. Basic and acidic residues predominate over residues 172–186 (SNNDDRYGRGRDDFR). A compositionally biased stretch (gly residues) spans 197–214 (NGGGGGSDFRGDNNGYGG). S221 is modified (phosphoserine). T244 bears the Phosphothreonine mark. Over residues 376–389 (RAKRGKSPERKEIE) the composition is skewed to basic and acidic residues. The tract at residues 376-431 (RAKRGKSPERKEIEAPPPVVEEEEPEPDMNEIKALPPPENYTPPPPPEPEPQPEKP) is disordered. A compositionally biased stretch (acidic residues) spans 395 to 404 (VEEEEPEPDM). The span at 410-425 (LPPPENYTPPPPPEPE) shows a compositional bias: pro residues.

Its subcellular location is the membrane. The protein resides in the clathrin-coated pit. It is found in the golgi apparatus. The protein localises to the cytoplasmic vesicle. It localises to the clathrin-coated vesicle. The sequence is that of Putative clathrin assembly protein At2g25430 from Arabidopsis thaliana (Mouse-ear cress).